Here is a 198-residue protein sequence, read N- to C-terminus: Small ribosomal subunit protein uS4 (198 aa).

The 61-residue stretch at 91-151 (SRLDNIVYRL…EKSKNLKIVE (61 aa)) folds into the S4 RNA-binding domain.

The protein belongs to the universal ribosomal protein uS4 family. As to quaternary structure, part of the 30S ribosomal subunit. Contacts protein S5. The interaction surface between S4 and S5 is involved in control of translational fidelity.

Its function is as follows. One of the primary rRNA binding proteins, it binds directly to 16S rRNA where it nucleates assembly of the body of the 30S subunit. With S5 and S12 plays an important role in translational accuracy. The sequence is that of Small ribosomal subunit protein uS4 from Phytoplasma australiense.